Consider the following 191-residue polypeptide: Peptidyl-tRNA hydrolase (191 aa).

A tRNA-binding site is contributed by Tyr-15. The active-site Proton acceptor is His-20. Residues Phe-66, Asn-68, and Asn-114 each contribute to the tRNA site.

This sequence belongs to the PTH family. As to quaternary structure, monomer.

The protein resides in the cytoplasm. It catalyses the reaction an N-acyl-L-alpha-aminoacyl-tRNA + H2O = an N-acyl-L-amino acid + a tRNA + H(+). Its function is as follows. Hydrolyzes ribosome-free peptidyl-tRNAs (with 1 or more amino acids incorporated), which drop off the ribosome during protein synthesis, or as a result of ribosome stalling. Functionally, catalyzes the release of premature peptidyl moieties from peptidyl-tRNA molecules trapped in stalled 50S ribosomal subunits, and thus maintains levels of free tRNAs and 50S ribosomes. In Streptococcus agalactiae serotype Ia (strain ATCC 27591 / A909 / CDC SS700), this protein is Peptidyl-tRNA hydrolase.